A 247-amino-acid polypeptide reads, in one-letter code: TM2 domain-containing protein 3 (247 aa).

The first 30 residues, 1–30 (MDLMMALKRVCRVLLFVTQMYVFSGRGSLS), serve as a signal peptide directing secretion. The Extracellular segment spans residues 31–179 (FEYSQPVAQP…RTFPKMLYCN (149 aa)). N87, N99, N139, N155, N169, and N179 each carry an N-linked (GlcNAc...) asparagine glycan. The helical transmembrane segment at 180 to 200 (WTGGYKWSTALALSITLGGFG) threads the bilayer. Positions 183 to 231 (GYKWSTALALSITLGGFGADRFYLGQWREGLGKLFSFGGLGIWTLIDVF) constitute a TM2 domain. At 201–215 (ADRFYLGQWREGLGK) the chain is on the cytoplasmic side. The helical transmembrane segment at 216–236 (LFSFGGLGIWTLIDVFLISVG) threads the bilayer. Topologically, residues 237–247 (YVGPADGSLYI) are extracellular.

The protein belongs to the TM2 family.

The protein resides in the membrane. This is TM2 domain-containing protein 3 (tm2d3) from Xenopus laevis (African clawed frog).